A 177-amino-acid polypeptide reads, in one-letter code: Tumor necrosis factor ligand superfamily member 18 (177 aa).

Over 1–27 the chain is Cytoplasmic; the sequence is MCLSHLENMPLSHSRTQGAQRSSWKLW. Residues 28-48 form a helical; Signal-anchor for type II membrane protein membrane-spanning segment; the sequence is LFCSIVMLLFLCSFSWLIFIF. The region spanning 47 to 170 is the THD domain; the sequence is IFLQLETAKE…NNTYWGIILL (124 aa). Topologically, residues 49–177 are extracellular; sequence LQLETAKEPC…ILLANPQFIS (129 aa). Cys-58 and Cys-78 are disulfide-bonded. 2 N-linked (GlcNAc...) asparagine glycosylation sites follow: Asn-129 and Asn-161.

The protein belongs to the tumor necrosis factor family. Homodimer. Homotrimer. As to expression, expressed at high levels in the small intestine, ovary, testis, kidney and endothelial cells.

The protein resides in the cell membrane. Cytokine that binds to TNFRSF18/AITR/GITR. Regulates T-cell responses. Can function as costimulator and lower the threshold for T-cell activation and T-cell proliferation. Important for interactions between activated T-lymphocytes and endothelial cells. Mediates activation of NF-kappa-B. Triggers increased phosphorylation of STAT1 and up-regulates expression of VCAM1 and ICAM1. Promotes leukocyte adhesion to endothelial cells. Regulates migration of monocytes from the splenic reservoir to sites of inflammation. This chain is Tumor necrosis factor ligand superfamily member 18, found in Homo sapiens (Human).